The chain runs to 100 residues: Small ribosomal subunit protein uS14 (100 aa).

This sequence belongs to the universal ribosomal protein uS14 family. As to quaternary structure, part of the 30S ribosomal subunit. Contacts proteins S3 and S10.

Its function is as follows. Binds 16S rRNA, required for the assembly of 30S particles and may also be responsible for determining the conformation of the 16S rRNA at the A site. The chain is Small ribosomal subunit protein uS14 from Prochlorococcus marinus (strain MIT 9303).